The sequence spans 442 residues: DNA N(6)-methyladenine demethylase ALKBH1D (442 aa).

Over residues 135–144 (SMVHFDSTNP) the composition is skewed to polar residues. The interval 135–185 (SMVHFDSTNPSSSSKSSQSQNLKIRKVRNHRNSGFKSRDQSPQRIKDPPPF) is disordered. A compositionally biased stretch (low complexity) spans 145-154 (SSSSKSSQSQ). The segment covering 157–167 (KIRKVRNHRNS) has biased composition (basic residues). Over residues 170–183 (KSRDQSPQRIKDPP) the composition is skewed to basic and acidic residues. The Fe2OG dioxygenase domain maps to 332 to 442 (SPDICIVNFY…GRLNLTFRHF (111 aa)). Position 339–341 (339–341 (NFY)) interacts with 2-oxoglutarate. His350, Asp352, and His410 together coordinate Fe cation. 2-oxoglutarate is bound at residue 434-440 (RLNLTFR).

The protein belongs to the alkB family. It depends on Fe(2+) as a cofactor. Expressed at low levels in roots, seedlings and rosette leaves, but barely in cauline leaves, stems, siliques and flowers.

The protein resides in the nucleus. Its subcellular location is the cytoplasm. It catalyses the reaction an N(6)-methyl-2'-deoxyadenosine in DNA + 2-oxoglutarate + O2 = a 2'-deoxyadenosine in DNA + formaldehyde + succinate + CO2. Dioxygenase that catalyzes DNA N(6)-methyladenine (6 mA) demethylation to modulate gene expression and regulate seed germination. The polypeptide is DNA N(6)-methyladenine demethylase ALKBH1D (Arabidopsis thaliana (Mouse-ear cress)).